The sequence spans 606 residues: MCGIFGYLGEKNAVPLVLEGLSKLEYRGYDSAGIATLVEGRLFVEKAVGPVSQLCSAVSSDIHSQAAIGHTRWATHGEPSRFNAHPHVDMDASCALVHNGIIENFQKLKEELEEQGVVFSSDTDTEVIVQLFARRYKETRDLIQSFSWTLKRLQGSFACALMHQDHPEVLLCAAHESPLILGLGEDEVFISSDIHAFLKYSGCTQTLASGELAVLRIGKSIETYNFELARIQKEVRCIDHTEDSLDKKGFDYYMLKELYEQPEVFERILHLTCEENGFTESFLKGFSLDEIQSLHIVACGSSYHAGYLAKYVIESIASIPVYVETASEFRYRQPYIAEHSLAILISQSGETADTLAALNEFRKLSKARVLGICNVRESALASRVDHCLFIEAGLEVGVASTKAFTAQLLLLILLGLRLANHRQVIAQEDLAQAIQGLKDLPNLTRLFLDSSIHDWRCRQIEETSFIFLGRRFMYPICMEAALKLKEIAYVEANAYPAGEMKHGPIALIREGTPVIVYCGDRSVYTKTIGAIMEVKARKAYVIALAPESNRDIAAVSDEQIYIPDSHDLAAPILFTIAGQIMAYTMALQRGTEVDRPRNLAKSVTVE.

C2 functions as the Nucleophile; for GATase activity in the catalytic mechanism. In terms of domain architecture, Glutamine amidotransferase type-2 spans 2–218; it reads CGIFGYLGEK…SGELAVLRIG (217 aa). 2 SIS domains span residues 278–424 and 448–596; these read FTES…HRQV and LDSS…VDRP. The active-site For Fru-6P isomerization activity is K601.

As to quaternary structure, homodimer.

It is found in the cytoplasm. It catalyses the reaction D-fructose 6-phosphate + L-glutamine = D-glucosamine 6-phosphate + L-glutamate. Catalyzes the first step in hexosamine metabolism, converting fructose-6P into glucosamine-6P using glutamine as a nitrogen source. The protein is Glutamine--fructose-6-phosphate aminotransferase [isomerizing] of Chlamydia trachomatis serovar D (strain ATCC VR-885 / DSM 19411 / UW-3/Cx).